A 156-amino-acid chain; its full sequence is Transcription elongation factor GreA (156 aa).

Residues 2–27 (EKTFPMTKEGLDKLKAELENLKLVKR) adopt a coiled-coil conformation.

Belongs to the GreA/GreB family.

In terms of biological role, necessary for efficient RNA polymerase transcription elongation past template-encoded arresting sites. The arresting sites in DNA have the property of trapping a certain fraction of elongating RNA polymerases that pass through, resulting in locked ternary complexes. Cleavage of the nascent transcript by cleavage factors such as GreA or GreB allows the resumption of elongation from the new 3'terminus. GreA releases sequences of 2 to 3 nucleotides. The sequence is that of Transcription elongation factor GreA from Lactococcus lactis subsp. cremoris (strain MG1363).